A 1432-amino-acid polypeptide reads, in one-letter code: Superkiller protein 3 (1432 aa).

TPR repeat units lie at residues 4–37 and 47–80; these read IKQL…DPDN and ALSS…VPDN. Residues 339–397 form a disordered region; sequence SANKPPEGHKKTEKETDIKDVDETNEDEVKDRVEDEVKDRVEDEVKDQDEEAKEDEEED. Residues 344-381 show a composition bias toward basic and acidic residues; it reads PEGHKKTEKETDIKDVDETNEDEVKDRVEDEVKDRVED. Positions 382 to 397 are enriched in acidic residues; the sequence is EVKDQDEEAKEDEEED. 9 TPR repeats span residues 425–458, 471–507, 508–541, 627–661, 702–735, 736–769, 945–985, 987–1018, and 1226–1259; these read ILAH…IAYN, REFS…DFSN, IQAK…SPNN, APGF…DAGD, NWPF…DPND, VESW…RPSH, ASYW…QSNT, ETWI…EPKA, and ISNH…SKDS.

This sequence belongs to the SKI3 family. Component of the SKI complex composed of at least SKI2, SKI3 and SKI8. The SKI complex interacts with SKI7, which makes the link between the SKI complex and the exosome in order to perform mRNA degradation.

The protein resides in the cytoplasm. It localises to the nucleus. Component of the SKI complex involved in 3'-mRNA degradation pathway. Represses dsRNA virus propagation by specifically blocking translation of viral mRNAs, perhaps recognizing the absence of CAP or poly(A). Essential for cell growth only in the presence of M1 replicon. This Saccharomyces cerevisiae (strain ATCC 204508 / S288c) (Baker's yeast) protein is Superkiller protein 3 (SKI3).